The sequence spans 265 residues: Pyridoxine 5'-phosphate synthase (265 aa).

Residue Asn6 coordinates 3-amino-2-oxopropyl phosphate. 8 to 9 (DH) provides a ligand contact to 1-deoxy-D-xylulose 5-phosphate. Arg17 contacts 3-amino-2-oxopropyl phosphate. His42 acts as the Proton acceptor in catalysis. 2 residues coordinate 1-deoxy-D-xylulose 5-phosphate: Arg44 and His49. The Proton acceptor role is filled by Glu69. A 1-deoxy-D-xylulose 5-phosphate-binding site is contributed by Thr99. Residue His213 is the Proton donor of the active site. Residues Gly214 and 235–236 (GQ) contribute to the 3-amino-2-oxopropyl phosphate site.

The protein belongs to the PNP synthase family. In terms of assembly, homooctamer; tetramer of dimers.

The protein resides in the cytoplasm. The catalysed reaction is 3-amino-2-oxopropyl phosphate + 1-deoxy-D-xylulose 5-phosphate = pyridoxine 5'-phosphate + phosphate + 2 H2O + H(+). The protein operates within cofactor biosynthesis; pyridoxine 5'-phosphate biosynthesis; pyridoxine 5'-phosphate from D-erythrose 4-phosphate: step 5/5. Catalyzes the complicated ring closure reaction between the two acyclic compounds 1-deoxy-D-xylulose-5-phosphate (DXP) and 3-amino-2-oxopropyl phosphate (1-amino-acetone-3-phosphate or AAP) to form pyridoxine 5'-phosphate (PNP) and inorganic phosphate. The polypeptide is Pyridoxine 5'-phosphate synthase (Nitratiruptor sp. (strain SB155-2)).